The following is a 541-amino-acid chain: Putative transferase YhbX (541 aa).

Over 1–60 (MTVFNKFARTFKSHWLLYLCVIVFGITNLVASSGAHMVQRLLFFVLTILVVKRISSLPLR) the chain is Periplasmic. Residues 61–81 (LLVAAPFVLLTAADMSISLYS) form a helical membrane-spanning segment. Over 82–110 (WCTFGTTFNDGFAISVLQSDPDEVVKMLG) the chain is Cytoplasmic. Residues 111–131 (MYIPYLCAFAFLSLLFLAVII) traverse the membrane as a helical segment. Over 132 to 141 (KYDVSLPTKK) the chain is Periplasmic. Residues 142–162 (VTGILLLIVISGSLFSACQFA) traverse the membrane as a helical segment. The Cytoplasmic segment spans residues 163–264 (YKDAKNKKAF…RKQIKLFNQA (102 aa)). The helical transmembrane segment at 265 to 285 (ISGAPYTALSVPLSLTADSVL) threads the bilayer. The Periplasmic portion of the chain corresponds to 286–541 (SHDIHNYPDN…QGNPTPEGQG (256 aa)).

The protein belongs to the phosphoethanolamine transferase family.

It is found in the cell inner membrane. Its function is as follows. Probably does not transfer phosphoethanolamine to lipid A. This is Putative transferase YhbX (yhbX) from Escherichia coli (strain K12).